The sequence spans 561 residues: Urocanate hydratase (561 aa).

NAD(+) contacts are provided by residues 52-53 (GG), Gln-130, 176-178 (GMG), Glu-196, Arg-201, 242-243 (NA), 263-267 (QTSAH), 273-274 (YL), and Tyr-322. Cys-410 is a catalytic residue. Gly-492 serves as a coordination point for NAD(+).

Belongs to the urocanase family. The cofactor is NAD(+).

It localises to the cytoplasm. The catalysed reaction is 4-imidazolone-5-propanoate = trans-urocanate + H2O. Its pathway is amino-acid degradation; L-histidine degradation into L-glutamate; N-formimidoyl-L-glutamate from L-histidine: step 2/3. Its function is as follows. Catalyzes the conversion of urocanate to 4-imidazolone-5-propionate. The polypeptide is Urocanate hydratase (Salmonella gallinarum (strain 287/91 / NCTC 13346)).